The following is a 787-amino-acid chain: Integrin beta-6 (787 aa).

Residues M1–G21 form the signal peptide. One can recognise a PSI domain in the interval G22–Q71. Residues G22–P708 are Extracellular-facing. Cystine bridges form between C23–C41, C31–C454, C34–C59, C44–C70, C197–C204, C252–C293, C394–C406, C426–C452, C456–C476, C467–C479, C481–C490, C492–C519, C502–C517, C511–C522, C524–C537, C539–C560, C544–C558, C552–C563, and C565–C574. Residues N48 and N97 are each glycosylated (N-linked (GlcNAc...) asparagine). The VWFA domain occupies Y131–L371. Mg(2+) contacts are provided by D140, S142, and S144. Ca(2+)-binding residues include S144, D147, D148, and E179. 4 residues coordinate Ca(2+): N235, D237, P239, and E240. Residue E240 participates in Mg(2+) binding. N260 carries N-linked (GlcNAc...) asparagine glycosylation. D271 and K355 together coordinate Ca(2+). N387 carries an N-linked (GlcNAc...) asparagine glycan. Residue N418 is glycosylated (N-linked (GlcNAc...) asparagine). I-EGF domains follow at residues C456–E491, C492–Q538, C539–N575, and C576–E615. N463 and N471 each carry an N-linked (GlcNAc...) asparagine glycan. An N-linked (GlcNAc...) asparagine glycan is attached at N541. An N-linked (GlcNAc...) asparagine glycan is attached at N575. Disulfide bonds link C576–C599, C583–C597, C591–C602, C604–C614, C617–C620, C624–C670, C630–C649, C633–C645, and C678–C701. Residues M709–W729 form a helical membrane-spanning segment. An interaction with HAX1 region spans residues K730–T757. Residues K730–G787 are Cytoplasmic-facing.

Belongs to the integrin beta chain family. As to quaternary structure, heterodimer of an alpha and a beta subunit. Interacts with FLNB. Interacts with HAX1. ITGAV:ITGB6 interacts with FBN1. ITGAV:ITGB6 interacts with TGFB1.

Its subcellular location is the cell membrane. The protein resides in the cell junction. The protein localises to the focal adhesion. Functionally, integrin alpha-V:beta-6 (ITGAV:ITGB6) is a receptor for fibronectin and cytotactin. It recognizes the sequence R-G-D in its ligands. ITGAV:ITGB6 acts as a receptor for fibrillin-1 (FBN1) and mediates R-G-D-dependent cell adhesion to FBN1. Integrin alpha-V:beta-6 (ITGAV:ITGB6) mediates R-G-D-dependent release of transforming growth factor beta-1 (TGF-beta-1) from regulatory Latency-associated peptide (LAP), thereby playing a key role in TGF-beta-1 activation. The polypeptide is Integrin beta-6 (ITGB6) (Ovis aries (Sheep)).